Reading from the N-terminus, the 160-residue chain is SsrA-binding protein (160 aa).

The protein belongs to the SmpB family.

The protein resides in the cytoplasm. Required for rescue of stalled ribosomes mediated by trans-translation. Binds to transfer-messenger RNA (tmRNA), required for stable association of tmRNA with ribosomes. tmRNA and SmpB together mimic tRNA shape, replacing the anticodon stem-loop with SmpB. tmRNA is encoded by the ssrA gene; the 2 termini fold to resemble tRNA(Ala) and it encodes a 'tag peptide', a short internal open reading frame. During trans-translation Ala-aminoacylated tmRNA acts like a tRNA, entering the A-site of stalled ribosomes, displacing the stalled mRNA. The ribosome then switches to translate the ORF on the tmRNA; the nascent peptide is terminated with the 'tag peptide' encoded by the tmRNA and targeted for degradation. The ribosome is freed to recommence translation, which seems to be the essential function of trans-translation. This chain is SsrA-binding protein, found in Actinobacillus succinogenes (strain ATCC 55618 / DSM 22257 / CCUG 43843 / 130Z).